A 142-amino-acid polypeptide reads, in one-letter code: Transcriptional regulator MraZ (142 aa).

SpoVT-AbrB domains follow at residues 5 to 48 (EFEY…PLCE) and 77 to 120 (AFDV…DKET).

This sequence belongs to the MraZ family. Forms oligomers.

The protein localises to the cytoplasm. It localises to the nucleoid. The chain is Transcriptional regulator MraZ from Dehalococcoides mccartyi (strain ATCC BAA-2266 / KCTC 15142 / 195) (Dehalococcoides ethenogenes (strain 195)).